The following is a 393-amino-acid chain: MANIDNKEQTELDQQDMEDVEDIEEEEAGEDANSKARQLTAQMMQNPQVLAALQERLDDLVGTPTGYIESLPKVVKRRVNALKNLQVKCAQIEAKFYEEVHELERKYAALYQPLFDKRSDIINATYEPTEEECEWKVDEEEDISGDLKDKAKLEEEKKDEEKEDPKGIPEFWLTVFKNVDLLSDMVQEHDEPILKHLKDIKVKFSEAGQPMSFTLEFHFEPNDFFTNEVLTKTYKMRSEPDESDPFSFDGPEIMGCTGCLIDWKKGKNVTLKTIKKKQKHKGRGTVRTVTKTVPNDSFFNFFSPPEVPENGELDDDAEAILTADFEIGHFLRERIIPRSVLYFTGEAIEDDDDDYDEEGEEADDEEGEEEADEDNDPDYEPKKDQNPAECKQQ.

Residues 1-10 (MANIDNKEQT) show a composition bias toward basic and acidic residues. 2 disordered regions span residues 1 to 36 (MANI…NSKA) and 132 to 165 (ECEW…KEDP). Acidic residues-rich tracts occupy residues 11–30 (ELDQ…EAGE) and 132–144 (ECEW…EDIS). An NAP1L motif motif is present at residues 126–151 (YEPTEEECEWKVDEEEDISGDLKDKA). Over residues 145 to 165 (GDLKDKAKLEEEKKDEEKEDP) the composition is skewed to basic and acidic residues. The Nuclear localization signal motif lies at 274 to 280 (IKKKQKH). A compositionally biased stretch (acidic residues) spans 347–378 (AIEDDDDDYDEEGEEADDEEGEEEADEDNDPD). A disordered region spans residues 347-393 (AIEDDDDDYDEEGEEADDEEGEEEADEDNDPDYEPKKDQNPAECKQQ). A compositionally biased stretch (basic and acidic residues) spans 379–393 (YEPKKDQNPAECKQQ).

This sequence belongs to the nucleosome assembly protein (NAP) family. As to quaternary structure, forms homomultimers. Interacts with histone B4. Interacts with the B-type cyclins ccnb1 and ccnb2. In terms of processing, phosphorylated by cyclin B-cdc2 kinase complexes.

It is found in the cytoplasm. The protein localises to the nucleus. Functionally, acts as a chaperone for the linker histone to facilitate deposition of histone B4 onto linker DNA. Required for both remodeling of sperm chromatin into nucleosomes, and linker histone binding to nucleosome core dimers. Plays a role in tissue-specific gene regulation. Required for primitive hemopoiesis, acting upstream of tal1/scl. This chain is Nucleosome assembly protein 1-like 1, found in Xenopus tropicalis (Western clawed frog).